The primary structure comprises 330 residues: Ketol-acid reductoisomerase (NADP(+)) (330 aa).

The KARI N-terminal Rossmann domain occupies 1–181 (MNAYYEQDAD…GGTKAGVIET (181 aa)). NADP(+) is bound by residues 24–27 (YGSQ), Arg-47, Ser-50, Ser-52, and 82–85 (DQYQ). The active site involves His-107. Gly-133 provides a ligand contact to NADP(+). The KARI C-terminal knotted domain occupies 182–327 (TFKNETETDL…SKLRDMMSWL (146 aa)). The Mg(2+) site is built by Asp-190, Glu-194, Glu-226, and Glu-230. Ser-251 contacts substrate.

This sequence belongs to the ketol-acid reductoisomerase family. It depends on Mg(2+) as a cofactor.

The catalysed reaction is (2R)-2,3-dihydroxy-3-methylbutanoate + NADP(+) = (2S)-2-acetolactate + NADPH + H(+). It catalyses the reaction (2R,3R)-2,3-dihydroxy-3-methylpentanoate + NADP(+) = (S)-2-ethyl-2-hydroxy-3-oxobutanoate + NADPH + H(+). Its pathway is amino-acid biosynthesis; L-isoleucine biosynthesis; L-isoleucine from 2-oxobutanoate: step 2/4. It functions in the pathway amino-acid biosynthesis; L-valine biosynthesis; L-valine from pyruvate: step 2/4. In terms of biological role, involved in the biosynthesis of branched-chain amino acids (BCAA). Catalyzes an alkyl-migration followed by a ketol-acid reduction of (S)-2-acetolactate (S2AL) to yield (R)-2,3-dihydroxy-isovalerate. In the isomerase reaction, S2AL is rearranged via a Mg-dependent methyl migration to produce 3-hydroxy-3-methyl-2-ketobutyrate (HMKB). In the reductase reaction, this 2-ketoacid undergoes a metal-dependent reduction by NADPH to yield (R)-2,3-dihydroxy-isovalerate. The polypeptide is Ketol-acid reductoisomerase (NADP(+)) (Chlorobium limicola (strain DSM 245 / NBRC 103803 / 6330)).